A 356-amino-acid polypeptide reads, in one-letter code: RuBisCO accumulation factor 1 (356 aa).

The segment at Leu9 to Asp192 is N-terminal alpha-helix. Residues Pro216–Val342 are C-terminal beta-sheet.

The protein belongs to the RAF family. Homodimer. Forms an RbcL(8)-Raf1(8) complex. Forms complexes of many stoichiometries with RbcL with and without RbcS. RbcX and Raf1 can bind simultaneously to RbcL.

Its subcellular location is the cytoplasm. In terms of biological role, a major RuBisCO chaperone. Acts after GroEL-GroES chaperonin to fold and/or assemble the large subunit of RuBisCO (ccbL, rbcL). Cooperates with RbcX in RbcL folding, plays the major role in assembly of dimers into RbcL(8)-Raf1(8) intermediate complexes. RbcS replaces Raf1, leading to holoenzyme formation. The Raf1 dimer brackets an RbcL dimer, leading to RbcL(8)-Raf1(8) complex formation. RbcS displaces Raf1, resulting in holoenzyme formation. Probably plays a role in early carboxysome assembly; in its absence CcaA, CcmM, CcmN, RbcL and RbcS colocalize in small patches while the shell proteins CcmK2, CcmK3 and CcmK4 are found diffused in the cytoplasm. Its function is as follows. It has been suggested that Raf1 and RbcX are partially functionally redundant. Other evidence suggests they are antagonistic in mediating RuBisCO assembly. This chain is RuBisCO accumulation factor 1, found in Synechococcus elongatus (strain ATCC 33912 / PCC 7942 / FACHB-805) (Anacystis nidulans R2).